Reading from the N-terminus, the 324-residue chain is UDP-N-acetylenolpyruvoylglucosamine reductase (324 aa).

Residues 36–211 (FRAGGLAELM…AEDKAKIRND (176 aa)) enclose the FAD-binding PCMH-type domain. The active site involves R183. The active-site Proton donor is the S232. E302 is a catalytic residue.

The protein belongs to the MurB family. FAD is required as a cofactor.

It localises to the cytoplasm. It catalyses the reaction UDP-N-acetyl-alpha-D-muramate + NADP(+) = UDP-N-acetyl-3-O-(1-carboxyvinyl)-alpha-D-glucosamine + NADPH + H(+). It participates in cell wall biogenesis; peptidoglycan biosynthesis. Functionally, cell wall formation. The chain is UDP-N-acetylenolpyruvoylglucosamine reductase from Sinorhizobium medicae (strain WSM419) (Ensifer medicae).